The primary structure comprises 724 residues: Pesticidal crystal protein Cry11Ba (724 aa).

This sequence belongs to the delta endotoxin family.

In terms of biological role, promotes colloidosmotic lysis by binding to the midgut epithelial cells of mosquitos. Active on Aedes aegypti, Culex pipiens and Anopheles stephensi larvae. This Bacillus thuringiensis subsp. jegathesan protein is Pesticidal crystal protein Cry11Ba (cry11Ba).